Reading from the N-terminus, the 599-residue chain is Proline--tRNA ligase (599 aa).

It belongs to the class-II aminoacyl-tRNA synthetase family. ProS type 1 subfamily. In terms of assembly, homodimer.

It localises to the cytoplasm. The enzyme catalyses tRNA(Pro) + L-proline + ATP = L-prolyl-tRNA(Pro) + AMP + diphosphate. Functionally, catalyzes the attachment of proline to tRNA(Pro) in a two-step reaction: proline is first activated by ATP to form Pro-AMP and then transferred to the acceptor end of tRNA(Pro). As ProRS can inadvertently accommodate and process non-cognate amino acids such as alanine and cysteine, to avoid such errors it has two additional distinct editing activities against alanine. One activity is designated as 'pretransfer' editing and involves the tRNA(Pro)-independent hydrolysis of activated Ala-AMP. The other activity is designated 'posttransfer' editing and involves deacylation of mischarged Ala-tRNA(Pro). The misacylated Cys-tRNA(Pro) is not edited by ProRS. This chain is Proline--tRNA ligase, found in Prochlorococcus marinus (strain MIT 9313).